We begin with the raw amino-acid sequence, 255 residues long: Segregation and condensation protein A (255 aa).

Belongs to the ScpA family. As to quaternary structure, component of a cohesin-like complex composed of ScpA, ScpB and the Smc homodimer, in which ScpA and ScpB bind to the head domain of Smc. The presence of the three proteins is required for the association of the complex with DNA.

The protein localises to the cytoplasm. In terms of biological role, participates in chromosomal partition during cell division. May act via the formation of a condensin-like complex containing Smc and ScpB that pull DNA away from mid-cell into both cell halves. This Lactiplantibacillus plantarum (strain ATCC BAA-793 / NCIMB 8826 / WCFS1) (Lactobacillus plantarum) protein is Segregation and condensation protein A.